The chain runs to 261 residues: Precorrin-6A synthase [deacetylating] (261 aa).

It carries out the reaction precorrin-5 + S-adenosyl-L-methionine + H2O = precorrin-6A + acetate + S-adenosyl-L-homocysteine + 2 H(+). Its pathway is cofactor biosynthesis; adenosylcobalamin biosynthesis; cob(II)yrinate a,c-diamide from precorrin-2 (aerobic route): step 5/10. Functionally, catalyzes the methylation of C-1 in precorrin-5 and the subsequent extrusion of acetic acid from the resulting intermediate to form cobalt-precorrin-6A. This Sinorhizobium sp protein is Precorrin-6A synthase [deacetylating] (cobF).